The chain runs to 291 residues: Citrate lyase subunit beta (291 aa).

Arginine 66 and glutamate 129 together coordinate substrate. Residues glutamate 129 and aspartate 156 each coordinate Mg(2+).

Belongs to the HpcH/HpaI aldolase family. Citrate lyase beta subunit subfamily. Oligomer with a subunit composition of (alpha,beta,gamma)6. It depends on Mg(2+) as a cofactor.

Its subcellular location is the cytoplasm. It carries out the reaction citrate = oxaloacetate + acetate. The enzyme catalyses (3S)-citryl-CoA = oxaloacetate + acetyl-CoA. Represents a citryl-ACP lyase. This Haemophilus influenzae (strain ATCC 51907 / DSM 11121 / KW20 / Rd) protein is Citrate lyase subunit beta (citE).